The following is a 102-amino-acid chain: Apolipoprotein A-II (102 aa).

An N-terminal signal peptide occupies residues 1 to 18 (MKLLAMVALLVTICSLEG). At M49 the chain carries Methionine sulfoxide.

This sequence belongs to the apolipoprotein A2 family. In terms of assembly, monomer. Interacts with NAXE and NDRG1. As to expression, plasma.

It is found in the secreted. May stabilize HDL (high density lipoprotein) structure by its association with lipids, and affect the HDL metabolism. This chain is Apolipoprotein A-II (Apoa2), found in Rattus norvegicus (Rat).